Here is a 49-residue protein sequence, read N- to C-terminus: Disintegrin echistatin-gamma (49 aa).

The Disintegrin domain occupies 1-47 (DCASGPCCRDCKFLEEGTICNMARGDDMDDYCNGKTCDCPRNPHKWP). 4 disulfides stabilise this stretch: Cys-2–Cys-11, Cys-7–Cys-32, Cys-8–Cys-37, and Cys-20–Cys-39. The Cell attachment site signature appears at 24-26 (RGD).

It belongs to the venom metalloproteinase (M12B) family. P-II subfamily. P-IIa sub-subfamily. Monomer. In terms of tissue distribution, expressed by the venom gland.

It localises to the secreted. Has antiplatelet activities on guinea pig, followed by human, rabbit and rat platelet-rich plasma. This chain is Disintegrin echistatin-gamma, found in Echis pyramidum leakeyi (Leakey's carpet viper).